Consider the following 468-residue polypeptide: Secreted triacylglycerol lipase LIP2 (468 aa).

An N-terminal signal peptide occupies residues methionine 1–alanine 22. An intrachain disulfide couples cysteine 125 to cysteine 295. The Nucleophile role is filled by serine 209. 3 N-linked (GlcNAc...) asparagine glycosylation sites follow: asparagine 242, asparagine 252, and asparagine 279. Active-site residues include aspartate 355 and histidine 389.

It belongs to the AB hydrolase superfamily. Lipase family. Class Lip subfamily.

Its subcellular location is the secreted. It catalyses the reaction a triacylglycerol + H2O = a diacylglycerol + a fatty acid + H(+). It carries out the reaction a monoacylglycerol + H2O = glycerol + a fatty acid + H(+). The catalysed reaction is a diacylglycerol + H2O = a monoacylglycerol + a fatty acid + H(+). In terms of biological role, secreted lipase that hydrolyzes acylglycerol lipids such as triacylglycerols and consequently releases free fatty acid. Due to an absence of fatty acid synthase genes in Malassezia species, secretory lipases are essential for the yeast to generate free fatty acids from degradation of sebum and assimilate them as lipid sources for growth. Plays important roles not only in lipid metabolism but also in the immune response of host cells and pathogenesis. The polypeptide is Secreted triacylglycerol lipase LIP2 (Malassezia furfur (Pityriasis versicolor infection agent)).